Consider the following 318-residue polypeptide: L-lactate dehydrogenase (318 aa).

NAD(+) is bound by residues Val-18, Asp-39, Lys-44, Tyr-69, and 83-84 (GA). Positions 86 and 92 each coordinate substrate. Residues Ser-105, 122–124 (VSN), and Ser-147 each bind NAD(+). 124–127 (NPVD) contributes to the substrate binding site. 152-155 (DTSR) contributes to the substrate binding site. Catalysis depends on His-179, which acts as the Proton acceptor. At Tyr-225 the chain carries Phosphotyrosine. Substrate is bound at residue Thr-234.

The protein belongs to the LDH/MDH superfamily. LDH family. Homotetramer.

The protein localises to the cytoplasm. The catalysed reaction is (S)-lactate + NAD(+) = pyruvate + NADH + H(+). Its pathway is fermentation; pyruvate fermentation to lactate; (S)-lactate from pyruvate: step 1/1. Catalyzes the conversion of lactate to pyruvate. The sequence is that of L-lactate dehydrogenase from Clostridium botulinum (strain Loch Maree / Type A3).